The following is a 183-amino-acid chain: ATP synthase subunit delta (183 aa).

The protein belongs to the ATPase delta chain family. As to quaternary structure, F-type ATPases have 2 components, F(1) - the catalytic core - and F(0) - the membrane proton channel. F(1) has five subunits: alpha(3), beta(3), gamma(1), delta(1), epsilon(1). F(0) has three main subunits: a(1), b(2) and c(10-14). The alpha and beta chains form an alternating ring which encloses part of the gamma chain. F(1) is attached to F(0) by a central stalk formed by the gamma and epsilon chains, while a peripheral stalk is formed by the delta and b chains.

The protein localises to the cell inner membrane. In terms of biological role, f(1)F(0) ATP synthase produces ATP from ADP in the presence of a proton or sodium gradient. F-type ATPases consist of two structural domains, F(1) containing the extramembraneous catalytic core and F(0) containing the membrane proton channel, linked together by a central stalk and a peripheral stalk. During catalysis, ATP synthesis in the catalytic domain of F(1) is coupled via a rotary mechanism of the central stalk subunits to proton translocation. Functionally, this protein is part of the stalk that links CF(0) to CF(1). It either transmits conformational changes from CF(0) to CF(1) or is implicated in proton conduction. The sequence is that of ATP synthase subunit delta from Thermotoga maritima (strain ATCC 43589 / DSM 3109 / JCM 10099 / NBRC 100826 / MSB8).